The sequence spans 181 residues: Oligoribonuclease (181 aa).

Positions 8–171 (LVWIDMEMTG…DDIRESIAEL (164 aa)) constitute an Exonuclease domain. The active site involves Y129.

This sequence belongs to the oligoribonuclease family.

Its subcellular location is the cytoplasm. 3'-to-5' exoribonuclease specific for small oligoribonucleotides. This Aeromonas hydrophila subsp. hydrophila (strain ATCC 7966 / DSM 30187 / BCRC 13018 / CCUG 14551 / JCM 1027 / KCTC 2358 / NCIMB 9240 / NCTC 8049) protein is Oligoribonuclease.